The primary structure comprises 183 residues: Holliday junction branch migration complex subunit RuvA (183 aa).

Residues 1–64 (MVVGIEGIIT…EDSNKFYGFL (64 aa)) form a domain I region. The domain II stretch occupies residues 65–139 (DKDEQKMFEM…DTRTKLENVS (75 aa)). Residue serine 139 is a region of interest, flexible linker. The segment at 139 to 183 (SDDKSEALAALLTLGFKQEKIISVLASAQATGTSELIKEALKKLR) is domain III.

The protein belongs to the RuvA family. Homotetramer. Forms an RuvA(8)-RuvB(12)-Holliday junction (HJ) complex. HJ DNA is sandwiched between 2 RuvA tetramers; dsDNA enters through RuvA and exits via RuvB. An RuvB hexamer assembles on each DNA strand where it exits the tetramer. Each RuvB hexamer is contacted by two RuvA subunits (via domain III) on 2 adjacent RuvB subunits; this complex drives branch migration. In the full resolvosome a probable DNA-RuvA(4)-RuvB(12)-RuvC(2) complex forms which resolves the HJ.

The protein localises to the cytoplasm. Its function is as follows. The RuvA-RuvB-RuvC complex processes Holliday junction (HJ) DNA during genetic recombination and DNA repair, while the RuvA-RuvB complex plays an important role in the rescue of blocked DNA replication forks via replication fork reversal (RFR). RuvA specifically binds to HJ cruciform DNA, conferring on it an open structure. The RuvB hexamer acts as an ATP-dependent pump, pulling dsDNA into and through the RuvAB complex. HJ branch migration allows RuvC to scan DNA until it finds its consensus sequence, where it cleaves and resolves the cruciform DNA. The sequence is that of Holliday junction branch migration complex subunit RuvA from Campylobacter jejuni subsp. doylei (strain ATCC BAA-1458 / RM4099 / 269.97).